The following is a 24-amino-acid chain: Fraternine (24 aa).

C11 and C24 are disulfide-bonded. C24 carries the cysteine amide modification.

As to expression, expressed by the venom gland.

The protein localises to the secreted. In terms of biological role, wasp venom peptide that acts as a potent mast cell degranulating peptide without hemolytic activity. Shows neuroprotective effect, since it prevents the death of dopaminergic neurons of the brain substantia nigra region and recovers motor deficit in a 6-hydroxydopamine (6-OHDA)-induced murine model of Parkinson disease. This chain is Fraternine, found in Parachartergus fraternus (Artistic wasp).